Reading from the N-terminus, the 631-residue chain is Biotin--protein ligase (631 aa).

The region spanning 341 to 553 (ELYAKLINGC…QFDRYHRLLL (213 aa)) is the BPL/LPL catalytic domain.

This sequence belongs to the biotin--protein ligase family. As to quaternary structure, monomer.

The protein resides in the cytoplasm. The enzyme catalyses apo-[methylmalonyl-CoA:pyruvate carboxytransferase] + biotin + ATP = holo-[methylmalonyl-CoA:pyruvate carboxytransferase] + AMP + diphosphate + H(+). The catalysed reaction is apo-[propionyl-CoA:carbon-dioxide ligase (ADP-forming)] + biotin + ATP = holo-[propionyl-CoA:carbon-dioxide ligase (ADP-forming)] + AMP + diphosphate + H(+). It carries out the reaction apo-[3-methylcrotonoyl-CoA:carbon-dioxide ligase (ADP-forming)] + biotin + ATP = holo-[3-methylcrotonoyl-CoA:carbon-dioxide ligase (ADP-forming)] + AMP + diphosphate + H(+). It catalyses the reaction biotin + L-lysyl-[protein] + ATP = N(6)-biotinyl-L-lysyl-[protein] + AMP + diphosphate + H(+). Its function is as follows. Post-translational modification of specific protein by attachment of biotin. Acts on various carboxylases such as acetyl-CoA-carboxylase, pyruvate carboxylase, propionyl CoA carboxylase, and 3-methylcrotonyl CoA carboxylase. This Schizosaccharomyces pombe (strain 972 / ATCC 24843) (Fission yeast) protein is Biotin--protein ligase (bpl1).